The chain runs to 354 residues: MRLEKGMKIKDTLKIMCPGTQLREGLENILRAKTGGLIVIGDNKEVMDTVDGGFNLNSDYSPSYVYELAKMDGAIVISEDLKKIVCANAQLIPDPSIVTHETGTRHRTAHRIAKQTNNIVIAISQRRNIITVYKGDIKYVLRDSSVILARANQAIQTLEKYVSVLERVINNLNLLEFQDLTTLFDVVTAIQRTEMVMRIVEEINMYILELGNEGRLISMQLNELVKHIERDGILLIRDYCKDEDGHNEVYEQIQKLSATELLDLDAIARVLGHAGESLVDTLISAKGYRILGKVPRIPSTVIENLIKEFKELNSVIEADIDELDIVEGIGEARAKAIKDGLKRIREQILLNKKI.

The 139-residue stretch at 6–144 (GMKIKDTLKI…GDIKYVLRDS (139 aa)) folds into the DAC domain. Residues G73, L91, and 104-108 (TRHRT) each bind ATP.

This sequence belongs to the DisA family. In terms of assembly, homooctamer. Mg(2+) is required as a cofactor.

The catalysed reaction is 2 ATP = 3',3'-c-di-AMP + 2 diphosphate. Participates in a DNA-damage check-point that is active prior to asymmetric division when DNA is damaged. DisA forms globular foci that rapidly scan along the chromosomes during sporulation, searching for lesions. When a lesion is present, DisA pauses at the lesion site. This triggers a cellular response that culminates in a temporary block in sporulation initiation. In terms of biological role, also has diadenylate cyclase activity, catalyzing the condensation of 2 ATP molecules into cyclic di-AMP (c-di-AMP). c-di-AMP acts as a signaling molecule that couples DNA integrity with progression of sporulation. The rise in c-di-AMP level generated by DisA while scanning the chromosome, operates as a positive signal that advances sporulation; upon encountering a lesion, the DisA focus arrests at the damaged site and halts c-di-AMP synthesis. The protein is DNA integrity scanning protein DisA of Clostridium botulinum (strain Eklund 17B / Type B).